Here is a 496-residue protein sequence, read N- to C-terminus: Aspartic proteinase (496 aa).

An N-terminal signal peptide occupies residues 1–24 (MAKRHLLLVTTCLWALSCALLLHA). Residues 25–59 (SSDGFLRVNLNKKRLDKEDLTAAKLAQQGNRLLKT) constitute a propeptide, activation peptide. Residues 77-493 (YYGVIGLGSP…DFGKDRIGFA (417 aa)) enclose the Peptidase A1 domain. The active site involves Asp95. 2 cysteine pairs are disulfide-bonded: Cys108-Cys114 and Cys273-Cys277. Asp282 is a catalytic residue. Positions 307–407 (IISTECKEVV…NQLCERLPSP (101 aa)) constitute a Saposin B-type domain. Cystine bridges form between Cys312–Cys401, Cys337–Cys373, Cys343–Cys370, and Cys415–Cys452. Asn387 is a glycosylation site (N-linked (GlcNAc...) asparagine).

Belongs to the peptidase A1 family.

The protein localises to the vacuole. Involved in the breakdown of propeptides of storage proteins in protein-storage vacuoles. This is Aspartic proteinase (RAP) from Oryza sativa subsp. japonica (Rice).